The following is a 142-amino-acid chain: Large ribosomal subunit protein uL11 (142 aa).

The protein belongs to the universal ribosomal protein uL11 family. In terms of assembly, part of the ribosomal stalk of the 50S ribosomal subunit. Interacts with L10 and the large rRNA to form the base of the stalk. L10 forms an elongated spine to which L12 dimers bind in a sequential fashion forming a multimeric L10(L12)X complex. Post-translationally, one or more lysine residues are methylated.

In terms of biological role, forms part of the ribosomal stalk which helps the ribosome interact with GTP-bound translation factors. The polypeptide is Large ribosomal subunit protein uL11 (Brucella anthropi (strain ATCC 49188 / DSM 6882 / CCUG 24695 / JCM 21032 / LMG 3331 / NBRC 15819 / NCTC 12168 / Alc 37) (Ochrobactrum anthropi)).